The primary structure comprises 908 residues: ATP-dependent RNA helicase DBP10 (908 aa).

A disordered region spans residues 1–84; sequence MSDDEAFDIA…DDDDDSKINS (84 aa). Composition is skewed to acidic residues over residues 17-43 and 66-79; these read DEDDYSDSSSNEGEDFQDEIIPSDDEK and SDNEGNNDDDDDDD. A Q motif motif is present at residues 99-127; that stretch reads GSFASFGLTKFILANIAKKGYKQPTPIQR. In terms of domain architecture, Helicase ATP-binding spans 130–301; that stretch reads IPLIMEGRDV…KAGLTNPVLV (172 aa). 143 to 150 is a binding site for ATP; sequence ARTGSGKT. The DEAD box signature appears at 249–252; that stretch reads DEAD. 2 disordered regions span residues 352–389 and 821–885; these read DMDKRKIDSDSEDDDDDEERKKGKKRYKFKKERLPPAN and LKPT…STEQ. Residues 373–382 are compositionally biased toward basic residues; that stretch reads KGKKRYKFKK. The 161-residue stretch at 373 to 533 folds into the Helicase C-terminal domain; sequence KGKKRYKFKK…EAKVEMLKKS (161 aa). Over residues 844–854 the composition is skewed to basic and acidic residues; the sequence is KLPDKFRDDYH.

This sequence belongs to the DEAD box helicase family. DDX54/DBP10 subfamily.

The protein resides in the nucleus. The protein localises to the nucleolus. It carries out the reaction ATP + H2O = ADP + phosphate + H(+). Functionally, ATP-binding RNA helicase involved in the biogenesis of 60S ribosomal subunits and is required for the normal formation of 25S and 5.8S rRNAs. This chain is ATP-dependent RNA helicase DBP10 (DBP10), found in Candida albicans (strain SC5314 / ATCC MYA-2876) (Yeast).